The primary structure comprises 233 residues: Leucyl/phenylalanyl-tRNA--protein transferase (233 aa).

The protein belongs to the L/F-transferase family.

It localises to the cytoplasm. The enzyme catalyses N-terminal L-lysyl-[protein] + L-leucyl-tRNA(Leu) = N-terminal L-leucyl-L-lysyl-[protein] + tRNA(Leu) + H(+). It carries out the reaction N-terminal L-arginyl-[protein] + L-leucyl-tRNA(Leu) = N-terminal L-leucyl-L-arginyl-[protein] + tRNA(Leu) + H(+). The catalysed reaction is L-phenylalanyl-tRNA(Phe) + an N-terminal L-alpha-aminoacyl-[protein] = an N-terminal L-phenylalanyl-L-alpha-aminoacyl-[protein] + tRNA(Phe). Functions in the N-end rule pathway of protein degradation where it conjugates Leu, Phe and, less efficiently, Met from aminoacyl-tRNAs to the N-termini of proteins containing an N-terminal arginine or lysine. This Laribacter hongkongensis (strain HLHK9) protein is Leucyl/phenylalanyl-tRNA--protein transferase.